The sequence spans 329 residues: MYNLQEITEEARKAIEALQDKSIESLEAIRVEYFGKKGHFTQLMQGLRDVSAEERPAVGAKINEAKQKVQAILNAKKVEWEEIALNERLAQERIDVSLPGRKMELGGLHPVSITINRVVQFFSKLGFTVEIGPEIETDYYNFDALNIPKHHPARADHDTFWFDAERLLRTQTSGVQIRTMEKMCPPIRIMAPGKVYRNDYDQTHTPMFHQIELLYVDKKANFTELKGLLHDFLRAFFEEDLQVRFRPSYFPFTEPSAEVDVMGKNGKWLEVLGCGMVHPNVLRNVGIDPNEYSGFAVGMGVERLTMLRYNVTDLRSFFENDLRFLKQFK.

Residue glutamate 254 coordinates Mg(2+).

Belongs to the class-II aminoacyl-tRNA synthetase family. Phe-tRNA synthetase alpha subunit type 1 subfamily. Tetramer of two alpha and two beta subunits. The cofactor is Mg(2+).

The protein localises to the cytoplasm. It carries out the reaction tRNA(Phe) + L-phenylalanine + ATP = L-phenylalanyl-tRNA(Phe) + AMP + diphosphate + H(+). The polypeptide is Phenylalanine--tRNA ligase alpha subunit (Histophilus somni (strain 2336) (Haemophilus somnus)).